A 402-amino-acid chain; its full sequence is NAD-dependent protein deacetylase sirtuin-7 (402 aa).

The segment at 1–23 is disordered; sequence MAAGGGLSRSERKAAERVRRLRE. The span at 9-23 shows a compositional bias: basic and acidic residues; the sequence is RSERKAAERVRRLRE. Positions 83 to 330 constitute a Deacetylase sirtuin-type domain; the sequence is PEELRRKVRE…QLLMNELGLE (248 aa). Residues 108-127 and 168-171 each bind NAD(+); these read GAGI…NGVW and QNCD. The active-site Proton acceptor is the His188. Zn(2+)-binding residues include Cys196, Cys199, Cys226, and Cys229. Residues 269–271, 298–300, and Cys316 each bind NAD(+); these read GSS and NLQ. Positions 355-402 are disordered; the sequence is SHSRKSLCRSREEAPPGDQSDPLASAPPILGGWFGRGCAKRAKRKKVA. Arg390 is subject to Asymmetric dimethylarginine; alternate. An Omega-N-methylarginine; alternate modification is found at Arg390. The segment covering 392-402 has biased composition (basic residues); that stretch reads CAKRAKRKKVA.

Belongs to the sirtuin family. Class IV subfamily. Interacts with UBTF and the RNA polymerase I complex. Interacts with components of the B-WICH complex, such as MYBBP1A, SMARCA5/SNF2H and BAZ1B/WSTF. Interacts with ELK4, leading to stabilization at target promoters for H3K18Ac deacetylation. Interacts with histone H2A and/or histone H2B. Interacts with DNMT1. Interacts with SIRT1. The cofactor is Zn(2+). Phosphorylated during mitosis. In terms of processing, methylation at Arg-390 by PRMT6 inhibits the H3K18Ac histone deacetylase activity, promoting mitochondria biogenesis and maintaining mitochondria respiration. Post-translationally, ubiquitinated via 'Lys-63'-linked ubiquitin chains. Deubiquitinated by USP7, inhibiting the H3K18Ac histone deacetylase activity and regulating gluconeogenesis. Ubiquitinated by E3 ubiquitin-protein ligase complex containing FBXO7; leading to proteasomal degradation. In terms of tissue distribution, detected in liver, spleen and testis. Detected in embryos.

The protein localises to the nucleus. It is found in the nucleolus. It localises to the nucleoplasm. Its subcellular location is the chromosome. The protein resides in the cytoplasm. The catalysed reaction is N(6)-acetyl-L-lysyl-[protein] + NAD(+) + H2O = 2''-O-acetyl-ADP-D-ribose + nicotinamide + L-lysyl-[protein]. The enzyme catalyses N(6)-glutaryl-L-lysyl-[protein] + NAD(+) + H2O = 2''-O-glutaryl-ADP-D-ribose + nicotinamide + L-lysyl-[protein]. It carries out the reaction N(6)-succinyl-L-lysyl-[protein] + NAD(+) + H2O = 2''-O-succinyl-ADP-D-ribose + nicotinamide + L-lysyl-[protein]. It catalyses the reaction N(6)-propanoyl-L-lysyl-[protein] + NAD(+) + H2O = 3''-O-propanoyl-ADP-D-ribose + nicotinamide + L-lysyl-[protein]. The catalysed reaction is N(6)-decanoyl-L-lysyl-[protein] + NAD(+) + H2O = 2''-O-decanoyl-ADP-D-ribose + nicotinamide + L-lysyl-[protein]. NAD-dependent protein-lysine deacetylase and deacylase activities are activated by nucleic acids. Histone deacetylase activity is activated by DNA. Protein-lysine deacylase activity is activated by RNA. H3K18Ac histone deacetylase activity is inhibited by methylation at Arg-390. H3K18Ac histone deacetylase activity is inhibited by deubiquitination by USP7. NAD-dependent protein-lysine deacylase that can act both as a deacetylase or deacylase (desuccinylase, depropionylase and deglutarylase), depending on the context. Also acts as a dedecanoylase. Specifically mediates deacetylation of histone H3 at 'Lys-18' (H3K18Ac). In contrast to other histone deacetylases, displays strong preference for a specific histone mark, H3K18Ac, directly linked to control of gene expression. H3K18Ac is mainly present around the transcription start site of genes and has been linked to activation of nuclear hormone receptors; SIRT7 thereby acts as a transcription repressor. Moreover, H3K18 hypoacetylation has been reported as a marker of malignancy in various cancers and seems to maintain the transformed phenotype of cancer cells. Also able to mediate deacetylation of histone H3 at 'Lys-36' (H3K36Ac) in the context of nucleosomes. Also mediates deacetylation of non-histone proteins, such as ATM, CDK9, DDX21, DDB1, FBL, FKBP5/FKBP51, GABPB1, RAN, RRP9/U3-55K and POLR1E/PAF53. Enriched in nucleolus where it stimulates transcription activity of the RNA polymerase I complex. Acts by mediating the deacetylation of the RNA polymerase I subunit POLR1E/PAF53, thereby promoting the association of RNA polymerase I with the rDNA promoter region and coding region. In response to metabolic stress, SIRT7 is released from nucleoli leading to hyperacetylation of POLR1E/PAF53 and decreased RNA polymerase I transcription. Required to restore the transcription of ribosomal RNA (rRNA) at the exit from mitosis. Promotes pre-ribosomal RNA (pre-rRNA) cleavage at the 5'-terminal processing site by mediating deacetylation of RRP9/U3-55K, a core subunit of the U3 snoRNP complex. Mediates 'Lys-37' deacetylation of Ran, thereby regulating the nuclear export of NF-kappa-B subunit RELA/p65. Acts as a regulator of DNA damage repair by mediating deacetylation of ATM during the late stages of DNA damage response, promoting ATM dephosphorylation and deactivation. May also deacetylate p53/TP53 and promotes cell survival, however such data need additional confirmation. Suppresses the activity of the DCX (DDB1-CUL4-X-box) E3 ubiquitin-protein ligase complexes by mediating deacetylation of DDB1, which prevents the interaction between DDB1 and CUL4 (CUL4A or CUL4B). Activates RNA polymerase II transcription by mediating deacetylation of CDK9, thereby promoting 'Ser-2' phosphorylation of the C-terminal domain (CTD) of RNA polymerase II. Deacetylates FBL, promoting histone-glutamine methyltransferase activity of FBL. Acts as a regulator of mitochondrial function by catalyzing deacetylation of GABPB1. Regulates Akt/AKT1 activity by mediating deacetylation of FKBP5/FKBP51. Required to prevent R-loop-associated DNA damage and transcription-associated genomic instability by mediating deacetylation and subsequent activation of DDX21, thereby overcoming R-loop-mediated stalling of RNA polymerases. In addition to protein deacetylase activity, also acts as protein-lysine deacylase. Acts as a protein depropionylase by mediating depropionylation of Osterix (SP7), thereby regulating bone formation by osteoblasts. Acts as a histone deglutarylase by mediating deglutarylation of histone H4 on 'Lys-91' (H4K91glu); a mark that destabilizes nucleosomes by promoting dissociation of the H2A-H2B dimers from nucleosomes. Acts as a histone desuccinylase: in response to DNA damage, recruited to DNA double-strand breaks (DSBs) and catalyzes desuccinylation of histone H3 on 'Lys-122' (H3K122succ), thereby promoting chromatin condensation and DSB repair. Also promotes DSB repair by promoting H3K18Ac deacetylation, regulating non-homologous end joining (NHEJ). Along with its role in DNA repair, required for chromosome synapsis during prophase I of female meiosis by catalyzing H3K18Ac deacetylation. Involved in transcriptional repression of LINE-1 retrotransposon via H3K18Ac deacetylation, and promotes their association with the nuclear lamina. Required to stabilize ribosomal DNA (rDNA) heterochromatin and prevent cellular senescence induced by rDNA instability. Acts as a negative regulator of SIRT1 by preventing autodeacetylation of SIRT1, restricting SIRT1 deacetylase activity. The polypeptide is NAD-dependent protein deacetylase sirtuin-7 (Mus musculus (Mouse)).